We begin with the raw amino-acid sequence, 1044 residues long: Integrin alpha-8 (1044 aa).

A signal peptide spans 1–23 (MPRRQPPRPLLLLSALLCAPASA). Residues 24–991 (FNLDEEKLTV…WSTPNVSFVI (968 aa)) lie on the Extracellular side of the membrane. FG-GAP repeat units follow at residues 28–90 (EEKL…RCRQ), 104–165 (NGTR…AYAE), 170–222 (RNSN…ITNY), 236–288 (QTGV…SSDL), 289–354 (TFIQ…FLFR), 355–413 (DPQI…GLKT), and 417–480 (QVLN…LNPM). A glycan (N-linked (GlcNAc...) asparagine) is linked at N66. C81 and C88 are joined by a disulfide. Residue N104 is glycosylated (N-linked (GlcNAc...) asparagine). C132 and C153 form a disulfide bridge. N159 is a glycosylation site (N-linked (GlcNAc...) asparagine). Residues C169 and C182 are joined by a disulfide bond. N221 carries an N-linked (GlcNAc...) asparagine glycan. Ca(2+)-binding residues include E257, T259, D261, and E265. N-linked (GlcNAc...) asparagine glycans are attached at residues N284 and N293. 10 residues coordinate Ca(2+): D311, N313, D315, L317, D319, D377, N379, D381, Y383, and D385. The short motif at 437-439 (RGD) is the Cell attachment site element. Residues D441, D443, N445, Y447, and D449 each contribute to the Ca(2+) site. N486 carries an N-linked (GlcNAc...) asparagine glycan. 2 cysteine pairs are disulfide-bonded: C489–C500 and C506–C562. N-linked (GlcNAc...) asparagine glycosylation occurs at N587. Disulfide bonds link C623–C629 and C695–C708. N-linked (GlcNAc...) asparagine glycans are attached at residues N701, N719, N751, N762, N818, N877, and N904. Disulfide bonds link C849–C905 and C910–C915. N-linked (GlcNAc...) asparagine glycosylation is found at N952 and N986. A helical transmembrane segment spans residues 992–1015 (PLWVIILAIMLGLLVLAVLTLALW). The Cytoplasmic segment spans residues 1016-1044 (KCGFFDRARPPQDDMADREQLTNNKTTDA).

It belongs to the integrin alpha chain family. As to quaternary structure, heterodimer of an alpha and a beta subunit. The alpha subunit is composed of a heavy and a light chain linked by a disulfide bond. Alpha-8 associates with beta-1. Prominently expressed on axons and on cells in contact with basal laminae in embryos.

It is found in the membrane. The protein localises to the cell membrane. In terms of biological role, integrin alpha-8/beta-1 functions in the genesis of kidney and probably of other organs by regulating the recruitment of mesenchymal cells into epithelial structures. It recognizes the sequence R-G-D in a wide array of ligands including TNC, FN1, SPP1, TGFB1, TGFB3 and VTN. NPNT is probably its functional ligand in kidney genesis. Neuronal receptor for TNC it mediates cell-cell interactions and regulates neurite outgrowth of sensory and motor neurons. The polypeptide is Integrin alpha-8 (ITGA8) (Gallus gallus (Chicken)).